The chain runs to 133 residues: MIIGIGNDIIDIRRVQKTLDRFGDRFIERIFTEVEKAKSEGRRMRAASYAKRFAAKEACSKALGTGMRRGVFWKDMGVVNLRGGQPTMALTGGALERLKEMTPEGTEAVIHLTITDDHPQAQAFVIISVVPKP.

Mg(2+)-binding residues include D8 and E57.

Belongs to the P-Pant transferase superfamily. AcpS family. Mg(2+) serves as cofactor.

The protein resides in the cytoplasm. It carries out the reaction apo-[ACP] + CoA = holo-[ACP] + adenosine 3',5'-bisphosphate + H(+). Functionally, transfers the 4'-phosphopantetheine moiety from coenzyme A to a Ser of acyl-carrier-protein. The sequence is that of Holo-[acyl-carrier-protein] synthase from Parvibaculum lavamentivorans (strain DS-1 / DSM 13023 / NCIMB 13966).